The chain runs to 186 residues: Acetyltransferase PA5475 (186 aa).

One can recognise an N-acetyltransferase domain in the interval 31-186 (VLIRPLREED…STQVIHRLAL (156 aa)). CoA is bound by residues 117–119 (VTI), G125, N156, and 161–163 (DLC).

Functionally, catalyzes the transfer of an acetyl group from acetyl coenzyme A (AcCoA) to an acceptor substrate and releases both CoA and the acetylated product. It prefers the antibiotic chloramphenicol. The polypeptide is Acetyltransferase PA5475 (Pseudomonas aeruginosa (strain ATCC 15692 / DSM 22644 / CIP 104116 / JCM 14847 / LMG 12228 / 1C / PRS 101 / PAO1)).